A 443-amino-acid chain; its full sequence is Anthocyanidin 3-O-glucoside 5-O-glucosyltransferase 2 (443 aa).

The first 22 residues, 1 to 22 (MVRRRVLLATFPAQGHINPALQ), serve as a signal peptide directing secretion. His-16 serves as the catalytic Proton acceptor. His-16 contacts an anthocyanidin. Gln-340, His-355, Trp-358, Asn-359, Ser-360, Glu-363, Asp-379, and Gln-380 together coordinate UDP-alpha-D-glucose.

This sequence belongs to the UDP-glycosyltransferase family.

It catalyses the reaction an anthocyanidin 3-O-beta-D-glucoside + UDP-alpha-D-glucose = an anthocyanidin 3,5-di-O-beta-D-glucoside + UDP + 2 H(+). The protein operates within pigment biosynthesis; anthocyanin biosynthesis. Catalyzes the glucosylation at the O-5 position of anthocyanidin 3-glucosides to form anthocyanidin 3,5-di-O-glucosides using UDP-glucose as sugar donor. Anthocyanidin 3,5-di-O-glucosides are molecules that are responsible for pigmentation. Also acts on anthocyanidin 3-O-(6-O-malonylglucoside). Much less active with hydroxycinnamoylglucose derivatives. No activity in the absence of the 3-O-glucoside group. The polypeptide is Anthocyanidin 3-O-glucoside 5-O-glucosyltransferase 2 (PF3R6) (Perilla frutescens (Beefsteak mint)).